Here is a 412-residue protein sequence, read N- to C-terminus: MIEAPPFDRSLGMLYYATDTYPSGGVIKAKPEDFLVEEVLYDGTVVALEGVSIEPRVGGWTWIHVVKRNVDTVKLVLRLAKALGLRSRDISIGGIKDTRAVTSQIVSVRGNVADLPKIPNVQFLGLWPMDKPIAPSLIYGNRFTIVLRNVERRECAEAALAALGKAALPNYYGYQRFGTIRPVSHLLGKALLRKDAEGFFHVMFCKIFPYESEAAKKARELACRGEYQKALEAFPRGFVEERALLRRLVRGSDLWNAAMAIPLQILRIYIEAAQSHLFNLLLSKRMELGPLDRPVEGDLVEVNGQVTYYVEDLGGEVVVPVVGAGVRMPRGRVLEAFVKVLKEEGLEPSAFLQMPRGLRAYGSYRRARLQARDLAYSLGDDLVLRFVLPRGGYATVLLREVVKPTEPYRHGF.

Residue D97 is the Nucleophile of the active site. The TRUD domain maps to 167–370 (ALPNYYGYQR…YGSYRRARLQ (204 aa)).

The protein belongs to the pseudouridine synthase TruD family.

It catalyses the reaction uridine(13) in tRNA = pseudouridine(13) in tRNA. Functionally, could be responsible for synthesis of pseudouridine from uracil-13 in transfer RNAs. In Pyrobaculum neutrophilum (strain DSM 2338 / JCM 9278 / NBRC 100436 / V24Sta) (Thermoproteus neutrophilus), this protein is Probable tRNA pseudouridine synthase D.